We begin with the raw amino-acid sequence, 312 residues long: DNA-directed RNA polymerase subunit alpha (312 aa).

The alpha N-terminal domain (alpha-NTD) stretch occupies residues 1–229 (MLQYQIDRIE…ELFQPLATVT (229 aa)). Positions 239–312 (EPTAEAQIPL…IQIPQSRTSA (74 aa)) are alpha C-terminal domain (alpha-CTD).

The protein belongs to the RNA polymerase alpha chain family. In terms of assembly, in cyanobacteria the RNAP catalytic core is composed of 2 alpha, 1 beta, 1 beta', 1 gamma and 1 omega subunit. When a sigma factor is associated with the core the holoenzyme is formed, which can initiate transcription.

It catalyses the reaction RNA(n) + a ribonucleoside 5'-triphosphate = RNA(n+1) + diphosphate. DNA-dependent RNA polymerase catalyzes the transcription of DNA into RNA using the four ribonucleoside triphosphates as substrates. In Synechococcus sp. (strain WH7803), this protein is DNA-directed RNA polymerase subunit alpha.